Consider the following 396-residue polypeptide: DNA excision repair protein ERCC-8 (396 aa).

WD repeat units lie at residues 33–73 (NKDR…LYDL), 88–129 (CSIG…VWDT), 133–173 (QTAD…LCDL), 177–216 (SCSH…LWDV), 235–274 (QAVE…LWNS), 281–321 (LVNY…VYTV), and 325–363 (EQIT…AWVP). Residues 371–396 (DDDETTTKSQLNPAFEDAWSSSDEEG) are disordered. Phosphoserine is present on residues Ser390, Ser391, and Ser392.

As to quaternary structure, part of the CSA complex (also named DCX(ERCC8) complex), a DCX E3 ubiquitin-protein ligase complex containing ERCC8, RBX1, DDB1 and CUL4A; the CSA complex interacts with RNA polymerase II; upon UV irradiation it interacts with the COP9 signalosome and preferentially with the hyperphosphorylated form of RNA polymerase II. Interacts with ERCC6/CSB (via CIM motif); promoting recruitment to lesion-stalled RNA polymerase II (Pol II). Interacts with KIAA1530/UVSSA. Interacts with a subunit of RNA polymerase II TFIIH.

The protein resides in the nucleus. Its subcellular location is the chromosome. It localises to the nucleus matrix. The protein operates within protein modification; protein ubiquitination. Its function is as follows. Substrate-recognition component of the CSA complex, a DCX (DDB1-CUL4-X-box) E3 ubiquitin-protein ligase complex, involved in transcription-coupled nucleotide excision repair (TC-NER), a process during which RNA polymerase II-blocking lesions are rapidly removed from the transcribed strand of active genes. Following recruitment to lesion-stalled RNA polymerase II (Pol II), the CSA complex mediates ubiquitination of Pol II subunit POLR2A/RPB1 at 'Lys-1268', a critical TC-NER checkpoint, governing RNA Pol II stability and initiating DNA damage excision by TFIIH recruitment. The CSA complex also promotes the ubiquitination and subsequent proteasomal degradation of ERCC6/CSB in a UV-dependent manner; ERCC6 degradation is essential for the recovery of RNA synthesis after transcription-coupled repair. Also plays a role in DNA double-strand breaks (DSSBs) repair by non-homologous end joining (NHEJ). This is DNA excision repair protein ERCC-8 from Homo sapiens (Human).